The sequence spans 187 residues: UPF0340 protein SMU_87 (187 aa).

The protein belongs to the UPF0340 family.

This chain is UPF0340 protein SMU_87, found in Streptococcus mutans serotype c (strain ATCC 700610 / UA159).